The sequence spans 226 residues: Phosphoglycolate phosphatase (226 aa).

Asp-9 functions as the Nucleophile in the catalytic mechanism. The Mg(2+) site is built by Asp-9 and Asp-11. Lys-150 lines the substrate pocket. Positions 173 and 177 each coordinate Mg(2+).

This sequence belongs to the archaeal SPP-like hydrolase family. Mg(2+) is required as a cofactor.

The catalysed reaction is 2-phosphoglycolate + H2O = glycolate + phosphate. In terms of biological role, catalyzes the dephosphorylation of 2-phosphoglycolate. The chain is Phosphoglycolate phosphatase from Methanosarcina mazei (strain ATCC BAA-159 / DSM 3647 / Goe1 / Go1 / JCM 11833 / OCM 88) (Methanosarcina frisia).